The primary structure comprises 431 residues: MSTAKLGCPKLRIMPLSIPSFPLPDARGRYGRFGGRYVPETLIPALDELEQAYEAAKQDPEFLDELDRLLREFVGRPNSLYLAERLTEHAGGAKIYLKREDQNFTGAHKINNCLAQALLAKRMGKQKIIAETGAGQHGVASATAAALLGLSCVVYMGEEDMRRQSLNVFRMQLLGAEVRPVTSGTATLKDATNEAIREWVTNVRDTFYILGSVVGPHPYPAMVRDFQSVIGEEVKVQLQEKEGRSVPDAIVACVGGGSNAIGIFAPFAYLPEGERPRLIGTEAAGHGVDTGMHAASVAWGRVGVLHGSMMYLMNDDEGQIVPPHSISAGLDYPGIGPEHCYYSVMGMAEYVPVTDAQALEGLQLLTRLEGIIPALESAHAISYAVQLARQMKPEEIVVVNLSGRGDKDVTEVMRLLEQSENKQAEGQEVKA.

N6-(pyridoxal phosphate)lysine is present on Lys-109.

Belongs to the TrpB family. As to quaternary structure, tetramer of two alpha and two beta chains. It depends on pyridoxal 5'-phosphate as a cofactor.

The enzyme catalyses (1S,2R)-1-C-(indol-3-yl)glycerol 3-phosphate + L-serine = D-glyceraldehyde 3-phosphate + L-tryptophan + H2O. It participates in amino-acid biosynthesis; L-tryptophan biosynthesis; L-tryptophan from chorismate: step 5/5. Functionally, the beta subunit is responsible for the synthesis of L-tryptophan from indole and L-serine. This Deinococcus radiodurans (strain ATCC 13939 / DSM 20539 / JCM 16871 / CCUG 27074 / LMG 4051 / NBRC 15346 / NCIMB 9279 / VKM B-1422 / R1) protein is Tryptophan synthase beta chain.